Reading from the N-terminus, the 725-residue chain is MRLNCFRIFVHIQKPTQIFKPFYRSLSSEASDKYHFVNGHKMSKAPTDMAPWPAFIEERIKLWDKLKAEYDAEIAAKESEPIQITLPDGKIHEGKTWRTTPFEIAERISKGLAEAAVIAKVNGAVWDLDRPFEGNAKLELLKFDDDEAKQVFWHSSAHVLGEAMERYCGGHLCYGPPIQEGFYYDMWHENRTICPDDFPKIDQIVKAAVKDKQKFERLEMTKEDLLEMFKYNEFKVRIITEKIHTPKTTVYRCGPLIDLCRGPHVRHTGKVKAMAITKNSSSYWEGKADAESLQRLYGISFPDSKQLKEWQKLQEEAAKRDHRKLGKEHDLFFFHQLSPGSAFWYPKGAHIYNKLVDFIRKQYRRRGFTEVITPNMYNKKLWETSGHWQHYSEDMFKIEVEKEEFGLKPMNCPGHCLMFGHMPHTYNELPFRFADFGVLHRNEMSGALTGLTRVRRFQQDDAHIFCRQDQISEEIKQCLDFLEYAYEKVFGFTFKLNLSTRPEGFLGNIETWDKAEADLTNALNASGRKWVLNPGDGAFYGPKIDITIQDALKRNFQCATIQLDFQLPNQFDLSYFDEKGEKQRPVMIHRAVLGSVERMTAILTESYGGKWPFWLSPRQCKIITVHESVRDYANDVKKQIFEAGFEIEYEENCGDTMNKQVRKAQLAQFNFILVIGAKEKENGTVNVRTRDNAVRGEVALDKLISKFRRFADEYVADTEKSEEWA.

Positions 80–142 constitute a TGS domain; that stretch reads EPIQITLPDG…EGNAKLELLK (63 aa).

It belongs to the class-II aminoacyl-tRNA synthetase family.

The protein localises to the cytoplasm. The enzyme catalyses tRNA(Thr) + L-threonine + ATP = L-threonyl-tRNA(Thr) + AMP + diphosphate + H(+). In Caenorhabditis elegans, this protein is Threonine--tRNA ligase, cytoplasmic.